We begin with the raw amino-acid sequence, 353 residues long: Phosphoribosylformylglycinamidine cyclo-ligase (353 aa).

The protein belongs to the AIR synthase family.

It is found in the cytoplasm. It carries out the reaction 2-formamido-N(1)-(5-O-phospho-beta-D-ribosyl)acetamidine + ATP = 5-amino-1-(5-phospho-beta-D-ribosyl)imidazole + ADP + phosphate + H(+). It participates in purine metabolism; IMP biosynthesis via de novo pathway; 5-amino-1-(5-phospho-D-ribosyl)imidazole from N(2)-formyl-N(1)-(5-phospho-D-ribosyl)glycinamide: step 2/2. The sequence is that of Phosphoribosylformylglycinamidine cyclo-ligase from Pseudomonas aeruginosa (strain ATCC 15692 / DSM 22644 / CIP 104116 / JCM 14847 / LMG 12228 / 1C / PRS 101 / PAO1).